A 141-amino-acid chain; its full sequence is uncharacterized protein (141 aa).

This is an uncharacterized protein from Thermoproteus tenax (TTV1).